The sequence spans 400 residues: Probable vacuolar protease A (400 aa).

Positions 1–18 are cleaved as a signal peptide; that stretch reads MKGSLLLAGATLLGCTSA. A propeptide spans 19 to 72 (activation peptide); the sequence is KLHSLKLKKVSLKEQLEHADIDVQIKSLGQKYMGIRPEQHEQQMFKEQTPIEVE. Positions 87-397 constitute a Peptidase A1 domain; the sequence is YFSEISIGTP…DLGKGTVGLA (311 aa). The active site involves Asp-105. The cysteines at positions 118 and 123 are disulfide-linked. The N-linked (GlcNAc...) asparagine glycan is linked to Asn-140. Residue Asp-289 is part of the active site. A disulfide bridge links Cys-323 with Cys-356. Asn-340 carries N-linked (GlcNAc...) asparagine glycosylation.

Belongs to the peptidase A1 family.

Its subcellular location is the vacuole lumen. The protein localises to the secreted. It catalyses the reaction Hydrolysis of proteins with broad specificity for peptide bonds. Cleaves -Leu-Leu-|-Val-Tyr- bond in a synthetic substrate. Does not act on esters of Tyr or Arg.. Vacuolar aspartic endopeptidase which is probably also secreted and contributes to virulence. The sequence is that of Probable vacuolar protease A (PEP2) from Arthroderma benhamiae (strain ATCC MYA-4681 / CBS 112371) (Trichophyton mentagrophytes).